Reading from the N-terminus, the 369-residue chain is Anhydro-N-acetylmuramic acid kinase (369 aa).

ATP is bound at residue 12 to 19; the sequence is GTSMDGVD.

This sequence belongs to the anhydro-N-acetylmuramic acid kinase family.

The enzyme catalyses 1,6-anhydro-N-acetyl-beta-muramate + ATP + H2O = N-acetyl-D-muramate 6-phosphate + ADP + H(+). The protein operates within amino-sugar metabolism; 1,6-anhydro-N-acetylmuramate degradation. It functions in the pathway cell wall biogenesis; peptidoglycan recycling. Catalyzes the specific phosphorylation of 1,6-anhydro-N-acetylmuramic acid (anhMurNAc) with the simultaneous cleavage of the 1,6-anhydro ring, generating MurNAc-6-P. Is required for the utilization of anhMurNAc either imported from the medium or derived from its own cell wall murein, and thus plays a role in cell wall recycling. The sequence is that of Anhydro-N-acetylmuramic acid kinase from Shewanella sp. (strain MR-7).